Consider the following 268-residue polypeptide: Tryptophan synthase alpha chain (268 aa).

Residues E49 and D60 each act as proton acceptor in the active site.

The protein belongs to the TrpA family. As to quaternary structure, tetramer of two alpha and two beta chains.

The enzyme catalyses (1S,2R)-1-C-(indol-3-yl)glycerol 3-phosphate + L-serine = D-glyceraldehyde 3-phosphate + L-tryptophan + H2O. Its pathway is amino-acid biosynthesis; L-tryptophan biosynthesis; L-tryptophan from chorismate: step 5/5. Functionally, the alpha subunit is responsible for the aldol cleavage of indoleglycerol phosphate to indole and glyceraldehyde 3-phosphate. The protein is Tryptophan synthase alpha chain of Haemophilus influenzae (strain PittEE).